Reading from the N-terminus, the 229-residue chain is MPNIKRYFLEKSIVKVKIDEYLAKQYYNAEYAGVEVLKTPIGTRVIIYAGRPSMIIGRGGRNIKQLAQIFEKVFGLENPQITITNVENPELNARVMAFRLAIALEKGYHFRRAAFISMRRIMNAGALGAEIIISGKLTTERARYEKLKEGIVYKSGQQLEKMIDRAIAIAMLKPGIFGVEVVITKPLKIEDKINLKESPSVPQEVSVTNVTFIEESSQKSEEKSEGEKE.

Positions 18–87 (IDEYLAKQYY…NPQITITNVE (70 aa)) constitute a KH type-2 domain.

This sequence belongs to the universal ribosomal protein uS3 family. Part of the 30S ribosomal subunit.

Its function is as follows. Binds the lower part of the 30S subunit head. This chain is Small ribosomal subunit protein uS3, found in Saccharolobus solfataricus (strain ATCC 35092 / DSM 1617 / JCM 11322 / P2) (Sulfolobus solfataricus).